The following is a 147-amino-acid chain: Bis(5'-nucleosyl)-tetraphosphatase [asymmetrical] (147 aa).

An N-acetylalanine modification is found at alanine 2. The 138-residue stretch at 2–139 (ALRACGLIIF…DMKAVLQEGH (138 aa)) folds into the Nudix hydrolase domain. Positions 43 to 64 (GHVEPGESDLQTALRETQEEAG) match the Nudix box motif.

Belongs to the Nudix hydrolase family. A divalent metal cation is required as a cofactor.

It catalyses the reaction P(1),P(4)-bis(5'-guanosyl) tetraphosphate + H2O = GMP + GTP + 2 H(+). The enzyme catalyses a 5'-end CoA-ribonucleoside in mRNA + H2O = a 5'-end phospho-adenosine-phospho-ribonucleoside in mRNA + (R)-4'-phosphopantetheine + 2 H(+). It carries out the reaction a 5'-end FAD-phospho-ribonucleoside in mRNA + H2O = a 5'-end phospho-adenosine-phospho-ribonucleoside in mRNA + FMN + 2 H(+). Inhibited by fluoride ions. Functionally, catalyzes the asymmetric hydrolysis of diadenosine 5',5'''-P1,P4-tetraphosphate (Ap4A) to yield AMP and ATP. Exhibits decapping activity towards FAD-capped RNAs and dpCoA-capped RNAs in vitro. This chain is Bis(5'-nucleosyl)-tetraphosphatase [asymmetrical] (NUDT2), found in Sus scrofa (Pig).